A 1233-amino-acid polypeptide reads, in one-letter code: Pesticidal crystal protein Cry1Bc (1233 aa).

This sequence belongs to the delta endotoxin family.

In terms of biological role, promotes colloidosmotic lysis by binding to the midgut epithelial cells of insects. This Bacillus thuringiensis subsp. morrisoni protein is Pesticidal crystal protein Cry1Bc (cry1Bc).